A 758-amino-acid polypeptide reads, in one-letter code: MNNSTRLISLFSPHPPPLFLLRGLYISRIANLRRFHRRAFPPSSVASTNLCSFRPLVSLPPLIPTFPIGRFYNHQVRVSAADFVPSYHNQQLPEWTELLQSLSKAGYFSDSGSISGLESEFFPGFPDELLRPALACLALARERPELLEMLSRRDVEVLVENGKPFLFKTGPDSLKRMSLYLRSGLQGIGKLMDMEKASTVDLMRLILSYVVDVASSEESKQHNKEIMESSVRSLLSQIAKMSLRPPESNVHDTMQNQYSDRDGQGVRSFQNNVEMKRGDWICSRCSGMNFARNVKCFQCDEARPKRQLTGSEWECPQCDFYNYGRNVACLRCDCKRPRDSSLNSANSDYSSDPELERRLVENEKKAQRWLSKVAQGGSDANSVDTDEDFPEIMPLRKGVNRYVVSTRKPPLERRLANTENRVATDGNSKRSDDNALGSKTTRSLNEILGSSSSLTSRSDDKNVSSRRFESSQGINTDFVPFVPLPSDMFAKKPKEETQIGLIDNIQVDGFSGGNQNVYQEDKSDANHSGKETDRLEKEDHKSEEPARWFKRVTELHNVSDLESAIPQEISPEKMPMRKGENRFVVSRKKDRSLTSPAYKRPEDSDFVPFVPFPPDYFAKEKQPKESIDTLPAPATENVSQVVQQEPREPSINKSDTVAVKIRNGKSLEGSLVKESDLLDMSEEAKAERWFKRVAEIKNISELSEIPDEDFPSIMPMRKGVNRFVVSKRKTPLERRLTSQRHQRNPHITNSDPTGKGDK.

The segment at 122–502 (FPGFPDELLR…PKEETQIGLI (381 aa)) is 3 X approximate repeat. 2 RanBP2-type zinc fingers span residues 276–305 (KRGDWICSRCSGMNFARNVKCFQCDEARPK) and 308–338 (LTGSEWECPQCDFYNYGRNVACLRCDCKRPR). The stretch at 368–415 (RWLSKVAQGGSDANSVDTDEDFPEIMPLRKGVNRYVVSTRKPPLERRL) is repeat 1. Disordered regions lie at residues 410 to 470 (PLER…RFES), 512 to 545 (GGNQNVYQEDKSDANHSGKETDRLEKEDHKSEEP), 572 to 606 (EKMPMRKGENRFVVSRKKDRSLTSPAYKRPEDSDF), 629 to 654 (TLPAPATENVSQVVQQEPREPSINKS), and 727 to 758 (KRKTPLERRLTSQRHQRNPHITNSDPTGKGDK). Composition is skewed to basic and acidic residues over residues 457 to 469 (RSDDKNVSSRRFE), 519 to 545 (QEDKSDANHSGKETDRLEKEDHKSEEP), and 572 to 581 (EKMPMRKGEN). Repeat unit 2 spans residues 547–596 (RWFKRVTELHNVSDLESAIPQEISPEKMPMRKGENRFVVSRKKDRSLTSP). The stretch at 688 to 736 (RWFKRVAEIKNISELSEIPDEDFPSIMPMRKGVNRFVVSKRKTPLERRL) is repeat 3.

Interacts in vitro with the chloroplast-located protein CCD4/NCED4. Homodimer. Interacts with ORRM1. Interacts with PCMP-H51/CRR28 and PCMP-H12/OTP82. Interacts with ORRM6. Weakly expressed in leaves and roots.

The protein localises to the plastid. It localises to the chloroplast. Its function is as follows. Probable component of some protein complex required for chloroplast and palisade cell development. Involved in C-to-U editing of chloroplastic RNA. Controls a large number of chloroplastic editing sites. Binds the editing recognition trans-factors PCMP-H51/CRR28 and PCMP-H12/OTP82. The chain is Zinc finger protein VAR3, chloroplastic from Arabidopsis thaliana (Mouse-ear cress).